Consider the following 199-residue polypeptide: Holliday junction branch migration complex subunit RuvA (199 aa).

Positions 1 to 64 (MIALLTGRLA…EDSISLFGFR (64 aa)) are domain I. A domain II region spans residues 65 to 143 (TLAEKEFFQL…KMDVAPSAQE (79 aa)). Positions 144–154 (APSSEAPAEVA) are flexible linker. A domain III region spans residues 154–199 (ADDVASALVNLGYKEAVVRKVLAEMSIEPDASTEAVLRQALKVLMK).

This sequence belongs to the RuvA family. As to quaternary structure, homotetramer. Forms an RuvA(8)-RuvB(12)-Holliday junction (HJ) complex. HJ DNA is sandwiched between 2 RuvA tetramers; dsDNA enters through RuvA and exits via RuvB. An RuvB hexamer assembles on each DNA strand where it exits the tetramer. Each RuvB hexamer is contacted by two RuvA subunits (via domain III) on 2 adjacent RuvB subunits; this complex drives branch migration. In the full resolvosome a probable DNA-RuvA(4)-RuvB(12)-RuvC(2) complex forms which resolves the HJ.

It localises to the cytoplasm. Functionally, the RuvA-RuvB-RuvC complex processes Holliday junction (HJ) DNA during genetic recombination and DNA repair, while the RuvA-RuvB complex plays an important role in the rescue of blocked DNA replication forks via replication fork reversal (RFR). RuvA specifically binds to HJ cruciform DNA, conferring on it an open structure. The RuvB hexamer acts as an ATP-dependent pump, pulling dsDNA into and through the RuvAB complex. HJ branch migration allows RuvC to scan DNA until it finds its consensus sequence, where it cleaves and resolves the cruciform DNA. In Geobacter sulfurreducens (strain ATCC 51573 / DSM 12127 / PCA), this protein is Holliday junction branch migration complex subunit RuvA.